Here is a 449-residue protein sequence, read N- to C-terminus: Wilms tumor protein homolog (449 aa).

Residues 48–84 are disordered; that stretch reads YGSLGGPAPPPAPPPPPPPPPHSFIKQEPSWGGAEPH. The segment covering 54–69 has biased composition (pro residues); the sequence is PAPPPAPPPPPPPPPH. Glycyl lysine isopeptide (Lys-Gly) (interchain with G-Cter in SUMO) cross-links involve residues Lys-73 and Lys-177. The 9aaTAD motif lies at 236 to 244; the sequence is MTWNQMNLG. 3 C2H2-type zinc fingers span residues 323-347, 353-377, and 383-405; these read FMCAYPGCNKRYFKLSHLQMHSRKH, YQCDFKDCERRFSRSDQLKRHQRRH, and FQCKTCQRKFSRSDHLKTHTRTH. Important for interaction with target DNA regions lie at residues 367-381 and 393-401; these read SDQLKRHQRRHTGVK and SRSDHLKTH. The short motif at 408-410 is the KTS motif element; sequence KTS. The C2H2-type 4 zinc-finger motif lies at 414-438; the sequence is FSCRWPSCQKKFARSDELVRHHNMH. Residue Lys-444 forms a Glycyl lysine isopeptide (Lys-Gly) (interchain with G-Cter in SUMO2) linkage.

It belongs to the EGR C2H2-type zinc-finger protein family. As to quaternary structure, interacts with ZNF224 via the zinc-finger region. Interacts with WTAP, AMER1 and SRY. Homodimer. Interacts with WTIP. Interacts with actively translating polysomes. Detected in nuclear ribonucleoprotein (mRNP) particles. Interacts with U2AF2. Interacts with HNRNPU via the zinc-finger region. Interacts with CITED2. Interacts with RBM4.

The protein localises to the nucleus speckle. It localises to the nucleus. The protein resides in the nucleoplasm. Its subcellular location is the nucleolus. It is found in the cytoplasm. In terms of biological role, transcription factor that plays an important role in cellular development and cell survival. Recognizes and binds to the DNA sequence 5'-GCG(T/G)GGGCG-3'. Regulates the expression of numerous target genes, including EPO. Plays an essential role for development of the urogenital system. It has a tumor suppressor as well as an oncogenic role in tumor formation. Function may be isoform-specific: isoforms lacking the KTS motif may act as transcription factors. Isoforms containing the KTS motif may bind mRNA and play a role in mRNA metabolism or splicing. Isoform 1 has lower affinity for DNA, and can bind RNA. This Sus scrofa (Pig) protein is Wilms tumor protein homolog (WT1).